The sequence spans 183 residues: Small ribosomal subunit protein uS4c (183 aa).

One can recognise an S4 RNA-binding domain in the interval 82–143 (MRLDNILFRL…KQRSKALIQN (62 aa)).

This sequence belongs to the universal ribosomal protein uS4 family. Part of the 30S ribosomal subunit. Contacts protein S5. The interaction surface between S4 and S5 is involved in control of translational fidelity.

The protein resides in the plastid. It localises to the chloroplast. One of the primary rRNA binding proteins, it binds directly to 16S rRNA where it nucleates assembly of the body of the 30S subunit. Functionally, with S5 and S12 plays an important role in translational accuracy. The protein is Small ribosomal subunit protein uS4c (rps4) of Gladiolus communis (Cornflag).